The primary structure comprises 95 residues: Small ribosomal subunit protein uS19 (95 aa).

This sequence belongs to the universal ribosomal protein uS19 family.

Its function is as follows. Protein S19 forms a complex with S13 that binds strongly to the 16S ribosomal RNA. In Lactobacillus gasseri (strain ATCC 33323 / DSM 20243 / BCRC 14619 / CIP 102991 / JCM 1131 / KCTC 3163 / NCIMB 11718 / NCTC 13722 / AM63), this protein is Small ribosomal subunit protein uS19.